A 1171-amino-acid polypeptide reads, in one-letter code: ATP-dependent helicase/deoxyribonuclease subunit B (1171 aa).

One can recognise a UvrD-like helicase ATP-binding domain in the interval 1–287 (MSLRFVIGRA…IPLMEQPRFH (287 aa)). 8 to 15 (GRAGSGKS) contacts ATP. One can recognise a UvrD-like helicase C-terminal domain in the interval 281-587 (MEQPRFHSPA…QFANIPPSLD (307 aa)). [4Fe-4S] cluster-binding residues include Cys-805, Cys-1129, Cys-1132, and Cys-1138.

Belongs to the helicase family. AddB/RexB type 1 subfamily. As to quaternary structure, heterodimer of AddA and AddB. Requires Mg(2+) as cofactor. [4Fe-4S] cluster serves as cofactor.

In terms of biological role, the heterodimer acts as both an ATP-dependent DNA helicase and an ATP-dependent, dual-direction single-stranded exonuclease. Recognizes the chi site generating a DNA molecule suitable for the initiation of homologous recombination. The AddB subunit has 5' -&gt; 3' nuclease activity but not helicase activity. The chain is ATP-dependent helicase/deoxyribonuclease subunit B from Bacillus cereus (strain G9842).